Consider the following 338-residue polypeptide: Anthocyanidin reductase ((2S)-flavan-3-ol-forming) (338 aa).

NADP(+) is bound by residues 18-21 (TGFV), K48, 87-90 (VATP), and Y168.

This sequence belongs to the NAD(P)-dependent epimerase/dehydratase family. Dihydroflavonol-4-reductase subfamily.

The enzyme catalyses a (2S,3R)-flavan-3-ol + 2 NADP(+) = an anthocyanidin with a 3-hydroxy group + 2 NADPH + 2 H(+). It catalyses the reaction a (2S,3S)-flavan-3-ol + 2 NADP(+) = an anthocyanidin with a 3-hydroxy group + 2 NADPH + 2 H(+). Its pathway is secondary metabolite biosynthesis; flavonoid biosynthesis. Its function is as follows. Produces the terminal flavan-3-ol monomers required for the formation of proanthocyanidins or condensed tannins in leaves and flowers, as well as in the skin and seeds of developing berries. Behaves as a reductase and as a C-3 epimerase. Catalyzes the double reduction of anthocyanidins, producing a mixture of (2S,3S)- and (2S,3R)-flavan-3-ols. The enzyme catalyzes sequential hydride transfers to C-2 and C-4, respectively and epimerization at C-3 is achieved by tautomerization that occurs between the two hydride transfers. Converts cyanidin, pelargonidin and delphinidin into catechin and epicatechin, afzelechin and epiafzelechin, and gallocatechin and epigallocatechin respectively. This Vitis vinifera (Grape) protein is Anthocyanidin reductase ((2S)-flavan-3-ol-forming).